The sequence spans 342 residues: Replication factor C subunit 4 (342 aa).

ATP contacts are provided by residues Val-24, Val-36, 61 to 68 (GMPGIGKT), Asn-157, and Arg-215.

This sequence belongs to the activator 1 small subunits family. Heteropentamer of subunits rfc1, rfc2, rfc3, rfc4 and rfc5 that forms a complex (RFC) with PCNA in the presence of ATP. Two other complexes exist where rfc1 can be replaced by either ctf18 or elg1 to form the ctf18-RFC or the elg1-RFC complexes respectively.

It is found in the nucleus. Its function is as follows. The elongation of primed DNA templates by DNA polymerase delta and epsilon requires the action of the accessory proteins PCNA and activator 1. The chain is Replication factor C subunit 4 (rfc4) from Schizosaccharomyces pombe (strain 972 / ATCC 24843) (Fission yeast).